The chain runs to 509 residues: Steroid 17-alpha-hydroxylase/17,20 lyase (509 aa).

Residue cysteine 440 coordinates heme.

This sequence belongs to the cytochrome P450 family. Heme is required as a cofactor.

It localises to the endoplasmic reticulum membrane. The protein resides in the microsome membrane. The catalysed reaction is a C21-steroid + reduced [NADPH--hemoprotein reductase] + O2 = a 17alpha-hydroxy-C21-steroid + oxidized [NADPH--hemoprotein reductase] + H2O + H(+). It catalyses the reaction progesterone + reduced [NADPH--hemoprotein reductase] + O2 = 17alpha-hydroxyprogesterone + oxidized [NADPH--hemoprotein reductase] + H2O + H(+). It carries out the reaction pregnenolone + reduced [NADPH--hemoprotein reductase] + O2 = 17alpha-hydroxypregnenolone + oxidized [NADPH--hemoprotein reductase] + H2O + H(+). The enzyme catalyses 17alpha-hydroxyprogesterone + reduced [NADPH--hemoprotein reductase] + O2 = androst-4-ene-3,17-dione + acetate + oxidized [NADPH--hemoprotein reductase] + H2O + 2 H(+). The catalysed reaction is 17alpha-hydroxyprogesterone + reduced [NADPH--hemoprotein reductase] + O2 = 16alpha,17alpha-dihydroxyprogesterone + oxidized [NADPH--hemoprotein reductase] + H2O + H(+). It catalyses the reaction 16alpha,17alpha-dihydroxyprogesterone + reduced [NADPH--hemoprotein reductase] + O2 = 6beta,16alpha,17alpha-trihydroxyprogesterone + oxidized [NADPH--hemoprotein reductase] + H2O + H(+). It carries out the reaction 17alpha-hydroxypregnenolone + reduced [NADPH--hemoprotein reductase] + O2 = 3beta-hydroxyandrost-5-en-17-one + acetate + oxidized [NADPH--hemoprotein reductase] + H2O + 2 H(+). The enzyme catalyses 16alpha,17alpha-dihydroxypregnenolone + reduced [NADPH--hemoprotein reductase] + O2 = 3beta,16alpha-dihydroxy-androst-5-en-17-one + acetate + oxidized [NADPH--hemoprotein reductase] + H2O + 2 H(+). The catalysed reaction is 3beta-hydroxyandrost-5-en-17-one + reduced [NADPH--hemoprotein reductase] + O2 = 3beta,16alpha-dihydroxy-androst-5-en-17-one + oxidized [NADPH--hemoprotein reductase] + H2O + H(+). It catalyses the reaction androst-4-ene-3,17-dione + reduced [NADPH--hemoprotein reductase] + O2 = 16alpha-hydroxyandrost-4-ene-3,17-dione + oxidized [NADPH--hemoprotein reductase] + H2O + H(+). The protein operates within steroid hormone biosynthesis. Its pathway is steroid biosynthesis; glucocorticoid biosynthesis. With respect to regulation, regulated predominantly by intracellular cAMP levels. The 17,20-lyase activity is stimulated by cytochrome b5, which acts as an allosteric effector increasing the Vmax of the lyase activity. Functionally, a cytochrome P450 monooxygenase involved in corticoid and androgen biosynthesis. Catalyzes 17-alpha hydroxylation of C21 steroids, which is common for both pathways. A second oxidative step, required only for androgen synthesis, involves an acyl-carbon cleavage. The 17-alpha hydroxy intermediates, as part of adrenal glucocorticoids biosynthesis pathway, are precursors of cortisol. Hydroxylates steroid hormones, pregnenolone and progesterone to form 17-alpha hydroxy metabolites, followed by the cleavage of the C17-C20 bond to form C19 steroids, dehydroepiandrosterone (DHEA) and androstenedione. Has 16-alpha hydroxylase activity. Catalyzes 16-alpha hydroxylation of 17-alpha hydroxy pregnenolone, followed by the cleavage of the C17-C20 bond to form 16-alpha-hydroxy DHEA. Also 16-alpha hydroxylates androgens, relevant for estriol synthesis. Mechanistically, uses molecular oxygen inserting one oxygen atom into a substrate, and reducing the second into a water molecule, with two electrons provided by NADPH via cytochrome P450 reductase (CPR; NADPH-ferrihemoprotein reductase). The polypeptide is Steroid 17-alpha-hydroxylase/17,20 lyase (Cyp17a1) (Peromyscus leucopus (White-footed mouse)).